A 326-amino-acid polypeptide reads, in one-letter code: MKSIAIIGASGYTGAQVTSLIQADDQLKIQGLYVSENSLDKGKTLASLYPVYSHIDLSLAPLTEQAKQAIVNEADAVVLATDHGVSLHLAAWFYQAGLAVFDLSGAYRFADSEQYPKWYGFEHIYPEVLAEAVYGLAEWNTEAIAASKMIAVPGCYPTASLTALKPLKDLMTDSLPVINAVSGVTGAGRKAQLHTSFCEVSLTPYGVLGHRHQPEIATQLGQQVIFTPHLGNFKRGILATITVQMKPGVSEADIAKAYEVYESAPLVNVYHNQFPKVDDVVHTPNCLLGWKYDPLNGYLVVASAIDNLMKGAASQAHQCIKIHFNY.

Cys155 is an active-site residue.

Belongs to the NAGSA dehydrogenase family. Type 1 subfamily.

Its subcellular location is the cytoplasm. The enzyme catalyses N-acetyl-L-glutamate 5-semialdehyde + phosphate + NADP(+) = N-acetyl-L-glutamyl 5-phosphate + NADPH + H(+). The protein operates within amino-acid biosynthesis; L-arginine biosynthesis; N(2)-acetyl-L-ornithine from L-glutamate: step 3/4. Catalyzes the NADPH-dependent reduction of N-acetyl-5-glutamyl phosphate to yield N-acetyl-L-glutamate 5-semialdehyde. This is N-acetyl-gamma-glutamyl-phosphate reductase from Shewanella loihica (strain ATCC BAA-1088 / PV-4).